We begin with the raw amino-acid sequence, 181 residues long: Crossover junction endodeoxyribonuclease RuvC (181 aa).

Residues Asp7, Glu67, and Asp139 contribute to the active site. Residues Asp7, Glu67, and Asp139 each contribute to the Mg(2+) site.

This sequence belongs to the RuvC family. Homodimer which binds Holliday junction (HJ) DNA. The HJ becomes 2-fold symmetrical on binding to RuvC with unstacked arms; it has a different conformation from HJ DNA in complex with RuvA. In the full resolvosome a probable DNA-RuvA(4)-RuvB(12)-RuvC(2) complex forms which resolves the HJ. Requires Mg(2+) as cofactor.

The protein localises to the cytoplasm. It catalyses the reaction Endonucleolytic cleavage at a junction such as a reciprocal single-stranded crossover between two homologous DNA duplexes (Holliday junction).. Functionally, the RuvA-RuvB-RuvC complex processes Holliday junction (HJ) DNA during genetic recombination and DNA repair. Endonuclease that resolves HJ intermediates. Cleaves cruciform DNA by making single-stranded nicks across the HJ at symmetrical positions within the homologous arms, yielding a 5'-phosphate and a 3'-hydroxyl group; requires a central core of homology in the junction. The consensus cleavage sequence is 5'-(A/T)TT(C/G)-3'. Cleavage occurs on the 3'-side of the TT dinucleotide at the point of strand exchange. HJ branch migration catalyzed by RuvA-RuvB allows RuvC to scan DNA until it finds its consensus sequence, where it cleaves and resolves the cruciform DNA. In Cupriavidus metallidurans (strain ATCC 43123 / DSM 2839 / NBRC 102507 / CH34) (Ralstonia metallidurans), this protein is Crossover junction endodeoxyribonuclease RuvC.